Reading from the N-terminus, the 280-residue chain is Ribulose-phosphate 3-epimerase, chloroplastic (280 aa).

Residues 1-45 (SLGSSTLLQSQISGFGGSQKLQKISFSNPNSLTFTRRRIQTVVNA) constitute a chloroplast transit peptide. Residue serine 62 participates in substrate binding. Residues histidine 87, aspartate 89, and histidine 120 each contribute to the a divalent metal cation site. The active-site Proton acceptor is the aspartate 89. Residues histidine 120, 198–201 (GFGG), 231–233 (DGG), and 253–254 (GS) contribute to the substrate site. Residue aspartate 231 coordinates a divalent metal cation. Residue aspartate 231 is the Proton donor of the active site.

Belongs to the ribulose-phosphate 3-epimerase family. Homohexamer. Co(2+) serves as cofactor. The cofactor is Fe(2+). It depends on Mn(2+) as a cofactor. Requires Zn(2+) as cofactor. Highest level of expression in leaves, whereas it is low in roots, tubers, and stems.

Its subcellular location is the plastid. The protein localises to the chloroplast thylakoid membrane. It catalyses the reaction D-ribulose 5-phosphate = D-xylulose 5-phosphate. It participates in carbohydrate biosynthesis; Calvin cycle. In terms of biological role, catalyzes the reversible epimerization of D-ribulose 5-phosphate to D-xylulose 5-phosphate. The sequence is that of Ribulose-phosphate 3-epimerase, chloroplastic from Solanum tuberosum (Potato).